The following is an 891-amino-acid chain: Alanine--tRNA ligase (891 aa).

Zn(2+) is bound by residues His-569, His-573, Cys-671, and His-675.

The protein belongs to the class-II aminoacyl-tRNA synthetase family. Homotetramer. It depends on Zn(2+) as a cofactor.

The protein resides in the cytoplasm. The catalysed reaction is tRNA(Ala) + L-alanine + ATP = L-alanyl-tRNA(Ala) + AMP + diphosphate. Functionally, catalyzes the attachment of alanine to tRNA(Ala) in a two-step reaction: alanine is first activated by ATP to form Ala-AMP and then transferred to the acceptor end of tRNA(Ala). Also edits incorrectly charged Ser-tRNA(Ala) and Gly-tRNA(Ala) via its editing domain. The protein is Alanine--tRNA ligase of Blochmanniella floridana.